We begin with the raw amino-acid sequence, 234 residues long: MSSEVSARRDAKKLVRSPSGLRMVPEHRAFGSPFGLEEPQWVPDKECRRCMQCDAKFDFLTRKHHCRRCGKCFCDRCCSQKVPLRRMCFVDPVRQCAECALVSLKEAEFYDKQLKVLLSGATFLVTFGNSEKPETMTCRLSNNQRYLFLDGDSHYEIEIVHISTVQILTEGFPPGGGNARATGMFLQYTVPGTEGVTQLKLTVVEDVTVGRRQAVAWLVAMHKAAKLLYESRDQ.

The FYVE-type zinc-finger motif lies at 44 to 104 (DKECRRCMQC…QCAECALVSL (61 aa)). Zn(2+) is bound by residues C50, C53, C66, C69, C74, C77, C96, and C99. Residues 107 to 234 (AEFYDKQLKV…AKLLYESRDQ (128 aa)) are PH-like.

As to quaternary structure, interacts with PTK2/FAK1.

The protein resides in the cell junction. It is found in the focal adhesion. The protein localises to the cytoplasmic vesicle. Its subcellular location is the endosome. In terms of biological role, plays a role in cell adhesion, and thereby in cell motility which requires repeated formation and disassembly of focal adhesions. Regulates microtubule-induced PTK2/FAK1 dephosphorylation, an event important for focal adhesion disassembly, as well as integrin beta-1/ITGB1 cell surface expression. This chain is Zinc finger FYVE domain-containing protein 21 (ZFYVE21), found in Homo sapiens (Human).